Reading from the N-terminus, the 319-residue chain is Ribonucleoside-diphosphate reductase small chain (319 aa).

Residues aspartate 70, glutamate 101, and histidine 104 each coordinate Fe cation. Residue tyrosine 108 is part of the active site. Fe cation-binding residues include glutamate 163, glutamate 197, and histidine 200. The interaction with R1 stretch occupies residues 313–319 (FSLDVDF).

Belongs to the ribonucleoside diphosphate reductase small chain family. Interacts with RNR1/OPG080 subunit. Can interact with host RNR1 supunit. The cofactor is Fe cation.

The catalysed reaction is a 2'-deoxyribonucleoside 5'-diphosphate + [thioredoxin]-disulfide + H2O = a ribonucleoside 5'-diphosphate + [thioredoxin]-dithiol. Functionally, ribonucleoside-diphosphate reductase holoenzyme provides the precursors necessary for viral DNA synthesis. Allows virus growth in non-dividing cells. Catalyzes the biosynthesis of deoxyribonucleotides from the corresponding ribonucleotides. The sequence is that of Ribonucleoside-diphosphate reductase small chain (OPG048) from Vaccinia virus (strain Copenhagen) (VACV).